We begin with the raw amino-acid sequence, 508 residues long: Protein disulfide-isomerase (508 aa).

The N-terminal stretch at 1–17 (MLRRALLCLAVAALVRA) is a signal peptide. In terms of domain architecture, Thioredoxin 1 spans 18-134 (DAPEEEDHVL…IVNWLKKRTG (117 aa)). Catalysis depends on nucleophile residues Cys-53 and Cys-56. Cys-53 and Cys-56 are oxidised to a cystine. Lys-200 bears the N6-acetyllysine mark. N6-succinyllysine occurs at positions 222 and 271. Residue Ser-331 is modified to Phosphoserine. The Thioredoxin 2 domain occupies 349–475 (GKIKPHLMSQ…FKKFLESGGQ (127 aa)). Phosphoserine; by FAM20C is present on Ser-357. Catalysis depends on nucleophile residues Cys-397 and Cys-400. Cysteines 397 and 400 form a disulfide. The residue at position 427 (Ser-427) is a Phosphoserine. The disordered stretch occupies residues 471-508 (ESGGQDGAGDDDDLEDLEEAEEPDMEEDDDQKAVKDEL). A compositionally biased stretch (acidic residues) spans 478-500 (AGDDDDLEDLEEAEEPDMEEDDD). Residues 505–508 (KDEL) carry the Prevents secretion from ER motif.

This sequence belongs to the protein disulfide isomerase family. In terms of assembly, heterodimer; heterodimerizes with the protein microsomal triglyceride transfer MTTP. Homodimer. Monomers and homotetramers may also occur. Interacts with P4HA2, forming a heterotetramer consisting of 2 alpha subunits (P4HA2) and 2 beta (P4HB), where P4HB plays the role of a structural subunit; this tetramer catalyzes the formation of 4-hydroxyproline in collagen. Also constitutes the structural subunit of the microsomal triacylglycerol transfer protein MTTP in mammalian cells. Stabilizes both enzymes and retain them in the ER without contributing to the catalytic activity. Binds UBQLN1. Interacts with ERO1B. Binds to CD4, and upon HIV-1 binding to the cell membrane, is part of a P4HB/PDI-CD4-CXCR4-gp120 complex. Interacts with ILDR2. Interacts with ERN1/IRE1A (via N-terminus); the interaction is enhanced by phosphorylation of P4HB by FAM20C in response to endoplasmic reticulum stress and results in attenuation of ERN1 activity. Post-translationally, phosphorylation of Ser-357 by FAM20C is induced by endoplasmic reticulum stress and results in a functional switch from oxidoreductase to molecular chaperone. It also promotes interaction with ERN1.

The protein localises to the endoplasmic reticulum. It localises to the endoplasmic reticulum lumen. Its subcellular location is the melanosome. The protein resides in the cell membrane. It carries out the reaction Catalyzes the rearrangement of -S-S- bonds in proteins.. This multifunctional protein catalyzes the formation, breakage and rearrangement of disulfide bonds. At the cell surface, seems to act as a reductase that cleaves disulfide bonds of proteins attached to the cell. May therefore cause structural modifications of exofacial proteins. Inside the cell, seems to form/rearrange disulfide bonds of nascent proteins. At high concentrations and following phosphorylation by FAM20C, functions as a chaperone that inhibits aggregation of misfolded proteins. At low concentrations, facilitates aggregation (anti-chaperone activity). May be involved with other chaperones in the structural modification of the TG precursor in hormone biogenesis. Also acts as a structural subunit of various enzymes such as prolyl 4-hydroxylase and microsomal triacylglycerol transfer protein MTTP. Receptor for LGALS9; the interaction retains P4HB at the cell surface of Th2 T helper cells, increasing disulfide reductase activity at the plasma membrane, altering the plasma membrane redox state and enhancing cell migration. This Homo sapiens (Human) protein is Protein disulfide-isomerase (P4HB).